The sequence spans 231 residues: MMKKQIINKKDLLGLGPNSKLIKDYKKQWTTLSKIQEETLIGNILGDVYIKKLKRNKHFLLQFEWKNKAYIEHIVRVFDEYVISPPTLYERKNHLGNKVITWRAQTFEHKAFDKLGYYFMENHKKIIKPDLVLNYITERSLAYWFMDDGGKWDYNKKTKNKSLVLHTQGFKKEEVEILINDLNIKFNLNCSIKFNKNKPIIYIPNKDYELFYNLVNPYIIPEMKYKLLFNV.

Belongs to the LAGLIDADG endonuclease family.

Its subcellular location is the mitochondrion. In terms of biological role, endonuclease involved in mitochondrial 21S rRNA gene intron homing. The protein is Probable intron-encoded endonuclease 1 of Wickerhamomyces canadensis (Yeast).